A 272-amino-acid polypeptide reads, in one-letter code: Neurogenin-2 (272 aa).

Residues 30–69 (LTPLSSSADEEEEEEPGASGGARRQRGAEAGQGARGGVAA) form a disordered region. One can recognise a bHLH domain in the interval 112-164 (TRRLKANNRERNRMHNLNAALDALREVLPTFPEDAKLTKIETLRFAHNYIWAL). The span at 197–239 (ASAALSSSGDSPSPASTWSCTNSPAPSSSVSSNSTSPYSCTLS) shows a compositional bias: low complexity. Residues 197–264 (ASAALSSSGD…PPDKHRYAPH (68 aa)) are disordered.

Efficient DNA binding requires dimerization with another bHLH protein.

The protein resides in the nucleus. Its function is as follows. Transcriptional regulator. Involved in neuronal differentiation. Activates transcription by binding to the E box (5'-CANNTG-3'). This chain is Neurogenin-2 (NEUROG2), found in Homo sapiens (Human).